The following is a 550-amino-acid chain: Chaperonin GroEL (550 aa).

ATP-binding positions include 30–33 (TLGP), lysine 51, 87–91 (DGTTT), glycine 415, 479–481 (NAA), and aspartate 495.

The protein belongs to the chaperonin (HSP60) family. As to quaternary structure, forms a cylinder of 14 subunits composed of two heptameric rings stacked back-to-back. Interacts with the co-chaperonin GroES.

The protein resides in the cytoplasm. It catalyses the reaction ATP + H2O + a folded polypeptide = ADP + phosphate + an unfolded polypeptide.. In terms of biological role, together with its co-chaperonin GroES, plays an essential role in assisting protein folding. The GroEL-GroES system forms a nano-cage that allows encapsulation of the non-native substrate proteins and provides a physical environment optimized to promote and accelerate protein folding. The chain is Chaperonin GroEL from Aromatoleum aromaticum (strain DSM 19018 / LMG 30748 / EbN1) (Azoarcus sp. (strain EbN1)).